The primary structure comprises 455 residues: Probable 1,4-beta-D-glucan cellobiohydrolase A (455 aa).

Residues 1–17 (MHQRALLFSAFWTAVQA) form the signal peptide. N-linked (GlcNAc...) asparagine glycosylation is present at N81. Catalysis depends on E227, which acts as the Nucleophile. The active-site Proton donor is E232. N285 carries an N-linked (GlcNAc...) asparagine glycan.

The protein belongs to the glycosyl hydrolase 7 (cellulase C) family.

Its subcellular location is the secreted. It catalyses the reaction Hydrolysis of (1-&gt;4)-beta-D-glucosidic linkages in cellulose and cellotetraose, releasing cellobiose from the non-reducing ends of the chains.. Functionally, the biological conversion of cellulose to glucose generally requires three types of hydrolytic enzymes: (1) Endoglucanases which cut internal beta-1,4-glucosidic bonds; (2) Exocellobiohydrolases that cut the disaccharide cellobiose from the non-reducing end of the cellulose polymer chain; (3) Beta-1,4-glucosidases which hydrolyze the cellobiose and other short cello-oligosaccharides to glucose. This chain is Probable 1,4-beta-D-glucan cellobiohydrolase A (cbhA), found in Aspergillus flavus (strain ATCC 200026 / FGSC A1120 / IAM 13836 / NRRL 3357 / JCM 12722 / SRRC 167).